Consider the following 81-residue polypeptide: Putative membrane protein insertion efficiency factor (81 aa).

The interval 61–81 is disordered; that stretch reads NDGGFDPVPPAPSSRTSSIAE.

The protein belongs to the UPF0161 family.

Its subcellular location is the cell inner membrane. Could be involved in insertion of integral membrane proteins into the membrane. This chain is Putative membrane protein insertion efficiency factor, found in Pseudomonas putida (strain ATCC 700007 / DSM 6899 / JCM 31910 / BCRC 17059 / LMG 24140 / F1).